A 98-amino-acid polypeptide reads, in one-letter code: Aspartyl/glutamyl-tRNA(Asn/Gln) amidotransferase subunit C (98 aa).

The protein belongs to the GatC family. As to quaternary structure, heterotrimer of A, B and C subunits.

It carries out the reaction L-glutamyl-tRNA(Gln) + L-glutamine + ATP + H2O = L-glutaminyl-tRNA(Gln) + L-glutamate + ADP + phosphate + H(+). The catalysed reaction is L-aspartyl-tRNA(Asn) + L-glutamine + ATP + H2O = L-asparaginyl-tRNA(Asn) + L-glutamate + ADP + phosphate + 2 H(+). Allows the formation of correctly charged Asn-tRNA(Asn) or Gln-tRNA(Gln) through the transamidation of misacylated Asp-tRNA(Asn) or Glu-tRNA(Gln) in organisms which lack either or both of asparaginyl-tRNA or glutaminyl-tRNA synthetases. The reaction takes place in the presence of glutamine and ATP through an activated phospho-Asp-tRNA(Asn) or phospho-Glu-tRNA(Gln). The protein is Aspartyl/glutamyl-tRNA(Asn/Gln) amidotransferase subunit C of Paenarthrobacter aurescens (strain TC1).